The chain runs to 341 residues: Glycerol-3-phosphate dehydrogenase [NAD(P)+] (341 aa).

NADPH contacts are provided by Ser-13, Trp-14, and Lys-108. Residues Lys-108, Gly-139, and Ser-141 each coordinate sn-glycerol 3-phosphate. Ala-143 is a binding site for NADPH. The sn-glycerol 3-phosphate site is built by Lys-194, Asp-247, Ser-257, Arg-258, and Asn-259. The active-site Proton acceptor is the Lys-194. An NADPH-binding site is contributed by Arg-258. NADPH-binding residues include Val-282 and Glu-284.

This sequence belongs to the NAD-dependent glycerol-3-phosphate dehydrogenase family.

The protein localises to the cytoplasm. It carries out the reaction sn-glycerol 3-phosphate + NAD(+) = dihydroxyacetone phosphate + NADH + H(+). It catalyses the reaction sn-glycerol 3-phosphate + NADP(+) = dihydroxyacetone phosphate + NADPH + H(+). It functions in the pathway membrane lipid metabolism; glycerophospholipid metabolism. In terms of biological role, catalyzes the reduction of the glycolytic intermediate dihydroxyacetone phosphate (DHAP) to sn-glycerol 3-phosphate (G3P), the key precursor for phospholipid synthesis. In Lactococcus lactis subsp. lactis (strain IL1403) (Streptococcus lactis), this protein is Glycerol-3-phosphate dehydrogenase [NAD(P)+].